A 147-amino-acid chain; its full sequence is Putative cystatin-9-like protein CST9LP1 (147 aa).

Residues 1–28 (MWSLPPSRALSCAPLLLLFSFQFLVTYA) form the signal peptide. Cysteines 98 and 108 form a disulfide. N-linked (GlcNAc...) asparagine glycosylation is found at N117 and N139. C122 and C142 are oxidised to a cystine.

Belongs to the cystatin family.

The protein localises to the secreted. This chain is Putative cystatin-9-like protein CST9LP1 (CST9LP1), found in Homo sapiens (Human).